The following is a 2275-amino-acid chain: Serine-rich adhesin for platelets (2275 aa).

The N-terminal stretch at 1-89 is a signal peptide; the sequence is MSKRQKEFHD…VNMLHDQQAF (89 aa). The serine-rich repeat region 1, SRR1 stretch occupies residues 90–264; sequence AASDAPLTSE…TANTITVNKD (175 aa). The segment covering 100–111 has biased composition (polar residues); that stretch reads LNTQSETVGNQN. Disordered regions lie at residues 100–229 and 751–2247; these read LNTQ…STST and NSMS…GLLG. Residues 112–128 show a composition bias toward low complexity; the sequence is STTIEASTSTADSTSVT. The span at 129–140 shows a compositional bias: polar residues; it reads KNSSSVQTSNSD. Residues 150 to 229 show a composition bias toward low complexity; the sequence is VTSTTNSTSN…NKTSTTSTST (80 aa). The segment at 265–751 is non-repeat region (NRR); it reads NLKQYMTTSG…TTFKYEVTRN (487 aa). Low complexity-rich tracts occupy residues 752–1392 and 1402–2218; these read SMSD…LSLS and SNSA…ATSE. The segment at 752–2236 is serine-rich repeat region 2, SRR2; that stretch reads SMSDSVSTSG…AQSEKRLPDT (1485 aa). The LPXTG sorting signal motif lies at 2233–2237; sequence LPDTG. Thr2236 is modified (pentaglycyl murein peptidoglycan amidated threonine). A propeptide spans 2237 to 2275 (removed by sortase); sequence GDSIKQNGLLGGVMTLLVGLGLMKRKKKKDENDQDDSQA.

The protein belongs to the serine-rich repeat protein (SRRP) family. In terms of assembly, interacts with human gp-340 (DMBT1). Proteolytically cleaved by a metalloprotease. In terms of processing, glycosylated. It is probable that most of the Ser residues in SSR1 and SSR2 are O-GlcNAcylated. Sequential glycosylation by sugar transferases are able to generate complex sugar polymorphisms.

Its subcellular location is the secreted. The protein resides in the cell wall. Its function is as follows. Mediates binding to human platelets, possibly through a receptor-ligand interaction. Probably associated with virulence in endovascular infection. Interacts with host (human) gp-340 via the non-repeat region (NRR or binding region). Binding is inhibited by N-acetylneuraminic acid (NeuAc). In Staphylococcus aureus (strain MW2), this protein is Serine-rich adhesin for platelets (sraP).